The primary structure comprises 195 residues: Probable prefoldin subunit 3 (195 aa).

The protein belongs to the prefoldin subunit alpha family. Heterohexamer of two PFD-alpha type and four PFD-beta type subunits.

Its function is as follows. Binds specifically to cytosolic chaperonin (c-CPN) and transfers target proteins to it. Binds to nascent polypeptide chain and promotes folding in an environment in which there are many competing pathways for nonnative proteins. This is Probable prefoldin subunit 3 (pfdn3) from Dictyostelium discoideum (Social amoeba).